A 177-amino-acid polypeptide reads, in one-letter code: Large ribosomal subunit protein uL6 (177 aa).

Residues 157–171 (YKGKGVRYSDENVRR) show a composition bias toward basic and acidic residues. The segment at 157-177 (YKGKGVRYSDENVRRKEAKKK) is disordered.

This sequence belongs to the universal ribosomal protein uL6 family. In terms of assembly, part of the 50S ribosomal subunit.

Functionally, this protein binds to the 23S rRNA, and is important in its secondary structure. It is located near the subunit interface in the base of the L7/L12 stalk, and near the tRNA binding site of the peptidyltransferase center. This is Large ribosomal subunit protein uL6 from Pseudoalteromonas translucida (strain TAC 125).